Reading from the N-terminus, the 299-residue chain is Pyrroline-5-carboxylate reductase 2 (299 aa).

Belongs to the pyrroline-5-carboxylate reductase family. As to quaternary structure, homodecamer; composed of 5 homodimers.

The catalysed reaction is L-proline + NADP(+) = (S)-1-pyrroline-5-carboxylate + NADPH + 2 H(+). The enzyme catalyses L-proline + NAD(+) = (S)-1-pyrroline-5-carboxylate + NADH + 2 H(+). Its pathway is amino-acid biosynthesis; L-proline biosynthesis; L-proline from L-glutamate 5-semialdehyde: step 1/1. The sequence is that of Pyrroline-5-carboxylate reductase 2 (pycr2) from Dictyostelium discoideum (Social amoeba).